We begin with the raw amino-acid sequence, 366 residues long: Carbamoyl phosphate synthase small chain (366 aa).

A CPSase region spans residues 1–171 (MLERRYLVLE…KTPYVSTGSD (171 aa)). Residues Ser-47, Gly-221, and Gly-223 each coordinate L-glutamine. One can recognise a Glutamine amidotransferase type-1 domain in the interval 173–360 (SVVLLDFGKK…MTMMKEFKEK (188 aa)). The active-site Nucleophile is the Cys-248. Leu-249, Gln-252, Asn-290, Gly-292, and Tyr-293 together coordinate L-glutamine. Residues His-333 and Glu-335 contribute to the active site.

It belongs to the CarA family. As to quaternary structure, composed of two chains; the small (or glutamine) chain promotes the hydrolysis of glutamine to ammonia, which is used by the large (or ammonia) chain to synthesize carbamoyl phosphate. Tetramer of heterodimers (alpha,beta)4.

The catalysed reaction is hydrogencarbonate + L-glutamine + 2 ATP + H2O = carbamoyl phosphate + L-glutamate + 2 ADP + phosphate + 2 H(+). The enzyme catalyses L-glutamine + H2O = L-glutamate + NH4(+). The protein operates within amino-acid biosynthesis; L-arginine biosynthesis; carbamoyl phosphate from bicarbonate: step 1/1. It functions in the pathway pyrimidine metabolism; UMP biosynthesis via de novo pathway; (S)-dihydroorotate from bicarbonate: step 1/3. Its function is as follows. Small subunit of the glutamine-dependent carbamoyl phosphate synthetase (CPSase). CPSase catalyzes the formation of carbamoyl phosphate from the ammonia moiety of glutamine, carbonate, and phosphate donated by ATP, constituting the first step of 2 biosynthetic pathways, one leading to arginine and/or urea and the other to pyrimidine nucleotides. The small subunit (glutamine amidotransferase) binds and cleaves glutamine to supply the large subunit with the substrate ammonia. The protein is Carbamoyl phosphate synthase small chain of Staphylococcus haemolyticus (strain JCSC1435).